Consider the following 533-residue polypeptide: Decreased expression in renal and prostate cancer protein (533 aa).

Positions methionine 1–proline 12 are enriched in basic and acidic residues. 4 disordered regions span residues methionine 1–valine 31, glutamine 67–arginine 164, methionine 177–glycine 259, and alanine 299–alanine 350. Position 160 is a phosphoserine (serine 160). Positions alanine 299–threonine 309 are enriched in polar residues. An Asymmetric dimethylarginine modification is found at arginine 368. Arginine 396 is subject to Omega-N-methylarginine. The residue at position 432 (serine 432) is a Phosphoserine.

Belongs to the DERPC family.

The protein localises to the nucleus. Potential tumor suppressor. The polypeptide is Decreased expression in renal and prostate cancer protein (Mus musculus (Mouse)).